We begin with the raw amino-acid sequence, 159 residues long: Phosphopantetheine adenylyltransferase (159 aa).

Thr-10 contributes to the substrate binding site. ATP is bound by residues 10–11 and His-18; that span reads TF. Residues Lys-42, Met-74, and Arg-88 each contribute to the substrate site. Residues 89-91, Glu-99, and 124-130 contribute to the ATP site; these read GLR and WSFISSS.

The protein belongs to the bacterial CoaD family. As to quaternary structure, homohexamer. Mg(2+) is required as a cofactor.

It localises to the cytoplasm. The enzyme catalyses (R)-4'-phosphopantetheine + ATP + H(+) = 3'-dephospho-CoA + diphosphate. It functions in the pathway cofactor biosynthesis; coenzyme A biosynthesis; CoA from (R)-pantothenate: step 4/5. Functionally, reversibly transfers an adenylyl group from ATP to 4'-phosphopantetheine, yielding dephospho-CoA (dPCoA) and pyrophosphate. The polypeptide is Phosphopantetheine adenylyltransferase (Klebsiella pneumoniae subsp. pneumoniae (strain ATCC 700721 / MGH 78578)).